A 249-amino-acid chain; its full sequence is Mannose-binding protein A (249 aa).

An N-terminal signal peptide occupies residues 1-20 (MLLFSSLPVLLLCVVTASYS). Residues 41-102 (VTNGTPGRDG…KGDPGDTSGV (62 aa)) form a disordered region. Positions 48 to 60 (RDGRDGPKGEKGE) are enriched in basic and acidic residues. At proline 54 the chain carries 4-hydroxyproline. A 5-hydroxylysine mark is found at lysine 55 and lysine 58. 2 O-linked (Gal...) hydroxylysine glycosylation sites follow: lysine 55 and lysine 58. Proline 61, proline 72, proline 78, and proline 89 each carry 4-hydroxyproline. The Collagen-like domain maps to 64 to 98 (GFRGSQGPPGKMGPPGNIGETGPLGPKGQKGDPGD). 2 positions are modified to 5-hydroxylysine: lysine 90 and lysine 93. Lysine 90 and lysine 93 each carry an O-linked (Gal...) hydroxylysine glycan. The C-type lectin domain occupies 135 to 246 (SRKKLYVTNG…CSSSFLAVCE (112 aa)). Disulfide bonds link cysteine 156-cysteine 245 and cysteine 223-cysteine 237. The Ca(2+) site is built by aspartate 189, glutamate 193, glutamate 213, asparagine 215, aspartate 216, glutamate 221, aspartate 222, asparagine 233, and aspartate 234. The interval 213 to 221 (EPNDHGSGE) is calcium-dependent carbohydrate binding.

Interacts with MASP1 and MASP2. Forms oligomeric complexes of 3, 4, 5 or, predominantly, 6 homotrimers. The homotrimers appear as globular heads that are connected to a central hub by thin stalks. Hydroxylated on lysine and proline residues within the collagen-like domain. In terms of processing, O-glycosylated. O-linked glycans on hydroxylysine residues consist of Glc-Gal disaccharides bound to the oxygen atom of post-translationally added hydroxyl groups. In terms of tissue distribution, detected in blood serum (at protein level). Expressed in liver. Weakly expressed in lung, testis and brain. Not detected in bone marrow and heart.

It localises to the secreted. Functionally, calcium-dependent lectin. Plays a role in the innate immune response by binding mannose, fucose and N-acetylglucosamine on bacteria, including strains of A.suis, H.parasuis and A.pleuropneumoniae, and activates the lectin complement pathway. According to some authors, it only binds mannose. The protein is Mannose-binding protein A of Sus scrofa (Pig).